Reading from the N-terminus, the 564-residue chain is Rho guanine nucleotide exchange factor 9 (564 aa).

In terms of domain architecture, SH3 spans D8–N67. Residues R100–E110 are interaction with GPHN. Residues M103–R287 form the DH domain. The 108-residue stretch at E318–K425 folds into the PH domain. The interval K451–P470 is disordered. S502 is modified (phosphoserine).

As to quaternary structure, interacts with GPHN.

Its subcellular location is the cytoplasm. The protein resides in the postsynaptic density. Its function is as follows. Acts as a guanine nucleotide exchange factor (GEF) for CDC42. Promotes formation of GPHN clusters. This Pongo abelii (Sumatran orangutan) protein is Rho guanine nucleotide exchange factor 9 (ARHGEF9).